We begin with the raw amino-acid sequence, 647 residues long: MARPPPLLVQKPSFLVEACCSPSPATHLAPYHTQPGARTPSTIQRDLLFPIPRRCHARSSPRPPALGGGPTQRLQHAARSAHPIPPSVKEIHPTFSEIPRARASDCCAAALGVQHWPARHPHPPLPSISLAVDYYLLGQRWWFGLTLFFVVLGSLSVQVFSFRWFVHDFSTEDSATTTASTCQQPGADCKTVVSSGSAAGEGEARPSTPQRQASNASKSNIAATNSGSNSNGATRTSGKHRSASCSFCIWLLQSLIHILQLGQVWRYLHTIYLGIRSRQSGESSRWRFYWKMVYEYADVSMLHLLATFLESAPQLVLQLCIIVQTHSLQALQGFTAAASLVSLAWALASYQKALRDSRDDKKPISYMAVIIQFCWHFFTIAARVITFALFASVFQLYFGIFIVLHWCIMTFWIVHCETEFCITKWEEIVFDMVVGIIYIFSWFNVKEGRTRCRLFIYYFVILLENTALSALWYLYKAPQIADAFAIPALCVVFSSFLTGVVFMLMYYAFFHPNGPRFGQSPSCACDDPATAFSMPPEVATSTLRSISNNRSVASDRDQKFAERDGCVPVFQVRPTAPPTPSSRPPRIEESVIKIDLFRNRYPAWERHVLDRSLRKAILAFECSPSPPRLQYKDDALIQERLEYETTL.

The helical transmembrane segment at 142-162 (WFGLTLFFVVLGSLSVQVFSF) threads the bilayer. The disordered stretch occupies residues 193-238 (VSSGSAAGEGEARPSTPQRQASNASKSNIAATNSGSNSNGATRTSG). The residue at position 197 (Ser-197) is a Phosphoserine. Positions 207-236 (STPQRQASNASKSNIAATNSGSNSNGATRT) are enriched in polar residues. A run of 7 helical transmembrane segments spans residues 245 to 265 (CSFC…GQVW), 328 to 348 (LQAL…WALA), 362 to 382 (KPIS…TIAA), 393 to 415 (VFQL…WIVH), 425 to 445 (WEEI…WFNV), 454 to 474 (LFIY…LWYL), and 484 to 504 (FAIP…VFML).

The protein belongs to the XK family. As to quaternary structure, homodimer; homodimerization takes place upon caspase cleavage. Interacts with the processed C-terminus of XRCC4 (protein XRCC4, C-terminus); interaction promotes the phospholipid scramblase activity. Post-translationally, undergoes proteolytic processing by caspase-3 (CASP3), caspase-6 (CASP6) and caspase-7 (CASP7) to generate the XK-related protein 4, processed form, leading to its activation.

It is found in the cell membrane. It catalyses the reaction a 1,2-diacyl-sn-glycero-3-phospho-L-serine(in) = a 1,2-diacyl-sn-glycero-3-phospho-L-serine(out). Phospholipid scramblase activity is activated upon caspase cleavage to generate the XK-related protein 4, processed form. Does not act prior the onset of apoptosis. With respect to regulation, homodimerizes upon caspase cleavage. Phospholipid scramblase activity is activated following interaction with the processed C-terminus of XRCC4 (protein XRCC4, C-terminus). Its function is as follows. Phospholipid scramblase that promotes phosphatidylserine exposure on apoptotic cell surface. Phosphatidylserine is a specific marker only present at the surface of apoptotic cells and acts as a specific signal for engulfment. In Rattus norvegicus (Rat), this protein is XK-related protein 4.